Here is a 162-residue protein sequence, read N- to C-terminus: D-aminoacyl-tRNA deacylase (162 aa).

The short motif at 143 to 144 (GP) is the Gly-cisPro motif, important for rejection of L-amino acids element.

It belongs to the DTD family. In terms of assembly, homodimer.

It is found in the cytoplasm. It carries out the reaction glycyl-tRNA(Ala) + H2O = tRNA(Ala) + glycine + H(+). The enzyme catalyses a D-aminoacyl-tRNA + H2O = a tRNA + a D-alpha-amino acid + H(+). Its function is as follows. An aminoacyl-tRNA editing enzyme that deacylates mischarged D-aminoacyl-tRNAs. Also deacylates mischarged glycyl-tRNA(Ala), protecting cells against glycine mischarging by AlaRS. Acts via tRNA-based rather than protein-based catalysis; rejects L-amino acids rather than detecting D-amino acids in the active site. By recycling D-aminoacyl-tRNA to D-amino acids and free tRNA molecules, this enzyme counteracts the toxicity associated with the formation of D-aminoacyl-tRNA entities in vivo and helps enforce protein L-homochirality. The sequence is that of D-aminoacyl-tRNA deacylase from Nitratidesulfovibrio vulgaris (strain ATCC 29579 / DSM 644 / CCUG 34227 / NCIMB 8303 / VKM B-1760 / Hildenborough) (Desulfovibrio vulgaris).